Here is a 283-residue protein sequence, read N- to C-terminus: Tryptophan 2,3-dioxygenase (283 aa).

Substrate-binding positions include 52 to 56, Tyr-114, and Arg-118; that span reads FIIQH. His-241 serves as a coordination point for heme. Residue Thr-255 coordinates substrate.

It belongs to the tryptophan 2,3-dioxygenase family. Homotetramer. The cofactor is heme.

The enzyme catalyses L-tryptophan + O2 = N-formyl-L-kynurenine. The protein operates within amino-acid degradation; L-tryptophan degradation via kynurenine pathway; L-kynurenine from L-tryptophan: step 1/2. Functionally, heme-dependent dioxygenase that catalyzes the oxidative cleavage of the L-tryptophan (L-Trp) pyrrole ring and converts L-tryptophan to N-formyl-L-kynurenine. Catalyzes the oxidative cleavage of the indole moiety. The protein is Tryptophan 2,3-dioxygenase of Pseudomonas fluorescens (strain ATCC BAA-477 / NRRL B-23932 / Pf-5).